The following is a 228-amino-acid chain: Phosphoglycolate phosphatase (228 aa).

The active-site Nucleophile is aspartate 12. Aspartate 12, aspartate 14, and aspartate 177 together coordinate Mg(2+).

Belongs to the HAD-like hydrolase superfamily. CbbY/CbbZ/Gph/YieH family. Mg(2+) is required as a cofactor.

It carries out the reaction 2-phosphoglycolate + H2O = glycolate + phosphate. It functions in the pathway organic acid metabolism; glycolate biosynthesis; glycolate from 2-phosphoglycolate: step 1/1. Functionally, specifically catalyzes the dephosphorylation of 2-phosphoglycolate. Is involved in the dissimilation of the intracellular 2-phosphoglycolate formed during the DNA repair of 3'-phosphoglycolate ends, a major class of DNA lesions induced by oxidative stress. This is Phosphoglycolate phosphatase from Vibrio vulnificus (strain YJ016).